The sequence spans 336 residues: Glyceraldehyde-3-phosphate dehydrogenase (336 aa).

NAD(+) contacts are provided by residues 12 to 13 (RI), Asp34, and Ser120. D-glyceraldehyde 3-phosphate-binding positions include 150 to 152 (SCT), Thr181, Arg198, 211 to 212 (TG), and Arg234. Residue Cys151 is the Nucleophile of the active site. Asn316 lines the NAD(+) pocket.

It belongs to the glyceraldehyde-3-phosphate dehydrogenase family. As to quaternary structure, homotetramer.

It is found in the cytoplasm. It carries out the reaction D-glyceraldehyde 3-phosphate + phosphate + NAD(+) = (2R)-3-phospho-glyceroyl phosphate + NADH + H(+). Its pathway is carbohydrate degradation; glycolysis; pyruvate from D-glyceraldehyde 3-phosphate: step 1/5. In terms of biological role, catalyzes the oxidative phosphorylation of glyceraldehyde 3-phosphate (G3P) to 1,3-bisphosphoglycerate (BPG) using the cofactor NAD. The first reaction step involves the formation of a hemiacetal intermediate between G3P and a cysteine residue, and this hemiacetal intermediate is then oxidized to a thioester, with concomitant reduction of NAD to NADH. The reduced NADH is then exchanged with the second NAD, and the thioester is attacked by a nucleophilic inorganic phosphate to produce BPG. The polypeptide is Glyceraldehyde-3-phosphate dehydrogenase (gapA) (Staphylococcus aureus).